The chain runs to 149 residues: D-aminoacyl-tRNA deacylase (149 aa).

The Gly-cisPro motif, important for rejection of L-amino acids signature appears at 137-138; the sequence is GP.

Belongs to the DTD family. Homodimer.

It is found in the cytoplasm. It carries out the reaction glycyl-tRNA(Ala) + H2O = tRNA(Ala) + glycine + H(+). The catalysed reaction is a D-aminoacyl-tRNA + H2O = a tRNA + a D-alpha-amino acid + H(+). Its function is as follows. An aminoacyl-tRNA editing enzyme that deacylates mischarged D-aminoacyl-tRNAs. Also deacylates mischarged glycyl-tRNA(Ala), protecting cells against glycine mischarging by AlaRS. Acts via tRNA-based rather than protein-based catalysis; rejects L-amino acids rather than detecting D-amino acids in the active site. By recycling D-aminoacyl-tRNA to D-amino acids and free tRNA molecules, this enzyme counteracts the toxicity associated with the formation of D-aminoacyl-tRNA entities in vivo and helps enforce protein L-homochirality. The chain is D-aminoacyl-tRNA deacylase from Thioalkalivibrio sulfidiphilus (strain HL-EbGR7).